Reading from the N-terminus, the 328-residue chain is Acyl-CoA wax alcohol acyltransferase 1 (328 aa).

2 consecutive transmembrane segments (helical) span residues 12–32 (SLSLLQWPLSYVAMFWIVQPL) and 34–53 (ICLLFTPLWPLPTVYFVWLL).

It belongs to the diacylglycerol acyltransferase family.

The protein resides in the endoplasmic reticulum membrane. The catalysed reaction is a long chain fatty alcohol + a fatty acyl-CoA = a wax ester + CoA. It carries out the reaction 1,2-di-(9Z-octadecenoyl)-sn-glycerol + (9Z)-octadecenoyl-CoA = 1,2,3-tri-(9Z-octadecenoyl)-glycerol + CoA. The enzyme catalyses hexadecan-1-ol + (9Z)-octadecenoyl-CoA = hexadecanyl (9Z)-octadecenoate + CoA. It catalyses the reaction decan-1-ol + (9Z)-octadecenoyl-CoA = 1-O-decyl-(9Z)-octadecenoate + CoA. The catalysed reaction is (9Z)-hexadecen-1-ol + (9Z)-octadecenoyl-CoA = 1-O-(9Z)-hexadecenyl (9Z)-octadecenoate + CoA. It carries out the reaction octadecan-1-ol + (9Z)-octadecenoyl-CoA = 1-O-octadecyl (9Z)-octadecenoate + CoA. The enzyme catalyses (9Z)-octadecen-1-ol + (9Z)-octadecenoyl-CoA = 1-O-(9Z)-octadecenyl (9Z)-octadecenoate + CoA. It catalyses the reaction hexadecan-1-ol + hexadecanoyl-CoA = hexadecanyl hexadecanoate + CoA. The catalysed reaction is hexadecan-1-ol + (9Z)-hexadecenoyl-CoA = 1-O-hexadecyl (9Z)-hexadecenoate + CoA. It carries out the reaction hexadecan-1-ol + octadecanoyl-CoA = hexadecanyl octadecanoate + CoA. The enzyme catalyses eicosan-1-ol + (9Z)-octadecenoyl-CoA = 1-O-eicosanyl (9Z)-octadecenoate + CoA. Its function is as follows. Acyltransferase that catalyzes the formation of ester bonds between fatty alcohols and fatty acyl-CoAs to form wax monoesters. Shows a strong preference for decyl alcohol (C10), with less activity towards C16 and C18 alcohols. Shows a strong preference for saturated acyl-CoAs. This is Acyl-CoA wax alcohol acyltransferase 1 (Awat1) from Mus musculus (Mouse).